A 344-amino-acid polypeptide reads, in one-letter code: Lipase chaperone (344 aa).

A helical membrane pass occupies residues 14-34; sequence VAVYGAVGLAAIAGVAIWSGA.

It belongs to the lipase chaperone family.

The protein localises to the cell inner membrane. Its function is as follows. May be involved in the folding of the extracellular lipase during its passage through the periplasm. The protein is Lipase chaperone of Burkholderia ambifaria (strain MC40-6).